The sequence spans 224 residues: Orotidine 5'-phosphate decarboxylase (224 aa).

Substrate contacts are provided by residues D10, K32, 59-68 (DLKLHDIPNT), T115, R175, Q184, G204, and R205. Catalysis depends on K61, which acts as the Proton donor.

Belongs to the OMP decarboxylase family. Type 1 subfamily. In terms of assembly, homodimer.

The enzyme catalyses orotidine 5'-phosphate + H(+) = UMP + CO2. Its pathway is pyrimidine metabolism; UMP biosynthesis via de novo pathway; UMP from orotate: step 2/2. In terms of biological role, catalyzes the decarboxylation of orotidine 5'-monophosphate (OMP) to uridine 5'-monophosphate (UMP). This chain is Orotidine 5'-phosphate decarboxylase, found in Erythrobacter litoralis (strain HTCC2594).